Consider the following 429-residue polypeptide: MVTGMIIKKIKELTKEEEEKIINRNKANFEEILPTVMEILKDVKEKGDEALKYYTKKFDGVEIEDFKVTDEEIEEAYNSVDYKVVEAIERAKENIYFFHKKQMEQIKDLNVENNGIILGQVVRAIEKVGCYVPGGRAFYPSTVLMTTIPAKVAGCEEIYITSPPTKDGKGNPATLIAGDIVGVSAIYKVGGVQAIGALAYGTETIPKVDIIVGPGNIYVTTAKKMVYGEVAIDFLAGPSEVLIIADETANAEFVALDFIAQAEHDPNASCVITTTSEKKAEEIKNKIFEEIEKAERKEIILKALENSAILIGDLEECIEFSNKYAPEHLEILTKNPEEVLNKIKHAGSVFLGEYSPVPVGDYASGTNHVLPTSQFARMSSGLNVETFLKKITYQKLDKESLKNIADIVITLAEAEGLFGHAEAVRRRLK.

Residues Y131, Q193, and N216 each contribute to the NAD(+) site. 3 residues coordinate substrate: S239, Q261, and H264. Positions 261 and 264 each coordinate Zn(2+). Catalysis depends on proton acceptor residues E327 and H328. Substrate contacts are provided by H328, D361, E415, and H420. Position 361 (D361) interacts with Zn(2+). H420 contacts Zn(2+).

The protein belongs to the histidinol dehydrogenase family. Zn(2+) is required as a cofactor.

It carries out the reaction L-histidinol + 2 NAD(+) + H2O = L-histidine + 2 NADH + 3 H(+). The protein operates within amino-acid biosynthesis; L-histidine biosynthesis; L-histidine from 5-phospho-alpha-D-ribose 1-diphosphate: step 9/9. In terms of biological role, catalyzes the sequential NAD-dependent oxidations of L-histidinol to L-histidinaldehyde and then to L-histidine. The chain is Histidinol dehydrogenase (hisD) from Methanocaldococcus jannaschii (strain ATCC 43067 / DSM 2661 / JAL-1 / JCM 10045 / NBRC 100440) (Methanococcus jannaschii).